The chain runs to 465 residues: Asparagine--tRNA ligase (465 aa).

Belongs to the class-II aminoacyl-tRNA synthetase family. Homodimer.

It is found in the cytoplasm. The enzyme catalyses tRNA(Asn) + L-asparagine + ATP = L-asparaginyl-tRNA(Asn) + AMP + diphosphate + H(+). The chain is Asparagine--tRNA ligase from Clostridium perfringens (strain ATCC 13124 / DSM 756 / JCM 1290 / NCIMB 6125 / NCTC 8237 / Type A).